Consider the following 306-residue polypeptide: Pantothenate kinase (306 aa).

90–97 serves as a coordination point for ATP; the sequence is GSVAVGKS.

This sequence belongs to the prokaryotic pantothenate kinase family.

Its subcellular location is the cytoplasm. The catalysed reaction is (R)-pantothenate + ATP = (R)-4'-phosphopantothenate + ADP + H(+). Its pathway is cofactor biosynthesis; coenzyme A biosynthesis; CoA from (R)-pantothenate: step 1/5. This Listeria welshimeri serovar 6b (strain ATCC 35897 / DSM 20650 / CCUG 15529 / CIP 8149 / NCTC 11857 / SLCC 5334 / V8) protein is Pantothenate kinase.